The chain runs to 132 residues: Agouti-signaling protein (132 aa).

The signal sequence occupies residues 1–22 (MDVTRLLLATLLVFLCFFTAYS). N-linked (GlcNAc...) asparagine glycosylation is present at N39. The tract at residues 61-87 (QISRKEAEKKRSSKKEASMKKVARPRT) is disordered. The span at 63–79 (SRKEAEKKRSSKKEASM) shows a compositional bias: basic and acidic residues. 5 cysteine pairs are disulfide-bonded: C93-C108, C100-C114, C107-C125, C111-C132, and C116-C123. In terms of domain architecture, Agouti spans 93 to 132 (CVATRDSCKSPAPACCDPCASCQCRFFRSACSCRVLSLNC).

The protein localises to the secreted. Involved in the regulation of melanogenesis. The binding of ASP to MC1R precludes alpha-MSH initiated signaling and thus blocks production of cAMP, leading to a down-regulation of eumelanogenesis (brown/black pigment) and thus increasing synthesis of pheomelanin (yellow/red pigment). The sequence is that of Agouti-signaling protein (ASIP) from Macaca nigra (Celebes black macaque).